Consider the following 809-residue polypeptide: Phenylalanine--tRNA ligase beta subunit (809 aa).

One can recognise a tRNA-binding domain in the interval 39–152 (KDKWPNVYVG…ADALVGMLAS (114 aa)). The B5 domain maps to 404–492 (KERNGIVLSL…RIAGYHTIPC (89 aa)). Residues D470, D476, E479, and E480 each coordinate Mg(2+). The 92-residue stretch at 717–808 (NRFPAVERDL…LNTETGAVLR (92 aa)) folds into the FDX-ACB domain.

It belongs to the phenylalanyl-tRNA synthetase beta subunit family. Type 1 subfamily. Tetramer of two alpha and two beta subunits. Requires Mg(2+) as cofactor.

The protein resides in the cytoplasm. The catalysed reaction is tRNA(Phe) + L-phenylalanine + ATP = L-phenylalanyl-tRNA(Phe) + AMP + diphosphate + H(+). This Dehalococcoides mccartyi (strain CBDB1) protein is Phenylalanine--tRNA ligase beta subunit.